Reading from the N-terminus, the 328-residue chain is Phenylalanine--tRNA ligase alpha subunit (328 aa).

Glutamate 253 contacts Mg(2+).

This sequence belongs to the class-II aminoacyl-tRNA synthetase family. Phe-tRNA synthetase alpha subunit type 1 subfamily. In terms of assembly, tetramer of two alpha and two beta subunits. Mg(2+) serves as cofactor.

It is found in the cytoplasm. It carries out the reaction tRNA(Phe) + L-phenylalanine + ATP = L-phenylalanyl-tRNA(Phe) + AMP + diphosphate + H(+). The sequence is that of Phenylalanine--tRNA ligase alpha subunit from Actinobacillus pleuropneumoniae serotype 5b (strain L20).